Consider the following 740-residue polypeptide: MQMDAKTGDISGGCPFHGDGGTRSLLGRTNRDWWPDQLQLEILKEGGRNPDPMGEDFDYVEAFNAIDYTALKQDLTDLMTDSQEWWPADYGHYGPFFIRMAWHAAGTYRTGDGRGGSSSGQQRFAPLNSWPDNGNLDKARRLLWPIKQKYGKHISWADLFILTGNVAIESMGGPVFGFGGGRKDVYEPEMVYWGTEEQWVDTGAETRIHPDEGRALENPLAAIQMGLIYVNPEGPGGDPHDPEGMARDMRETFARMAMNDEETVALTAGGHAFGKCHGAKPADTFGTAPEGENLHLMGMGWLTDEEEIRNGHVTTSGIEGPWTPNPTQWGNDYFRLLFKYEYELTQSPAGAYQWTPVDPEEADMAPDARDPSKKVPTIMTTADMALKRDPDYRKISERFRDDQAALDDAFARAWFKLCHRDMGPKVRYQGPEVPSEDLIWQDPVPSGTAPSDSDVSSFKSAVLDSGLTVSELVKAAWASASTYRNSDHRGGANGARVRLAPQKDWAANDPEELGKVLSKLDELRGNLSMADAIVLAGSAAIEKAARDAGHSVSVDVTTGRGDATDEHTDAESFEPLEPFADGFRNYLKTKASVKTEEMLIDKAHLLGLSIPEMTALVGGMRALGAVSRHADHGDRIGVLTDRPGQLTNDFFVNLLDMGTKWEVVDESGDEEFVGKDRKSGDEKWRATRTDLVFGSNSQLRAQAEVFAESGNEQLFLDTFVKAWTKVMDADRFDVTYAKYN.

Positions Trp102–Tyr229 form a cross-link, tryptophyl-tyrosyl-methioninium (Trp-Tyr) (with M-256). Catalysis depends on His103, which acts as the Proton acceptor. The segment at Gly111–Trp130 is disordered. The tryptophyl-tyrosyl-methioninium (Tyr-Met) (with W-102) cross-link spans Tyr229–Met256. His271 is a binding site for heme b.

It belongs to the peroxidase family. Peroxidase/catalase subfamily. In terms of assembly, homodimer or homotetramer. Heme b serves as cofactor. Post-translationally, formation of the three residue Trp-Tyr-Met cross-link is important for the catalase, but not the peroxidase activity of the enzyme.

The enzyme catalyses H2O2 + AH2 = A + 2 H2O. It catalyses the reaction 2 H2O2 = O2 + 2 H2O. Functionally, bifunctional enzyme with both catalase and broad-spectrum peroxidase activity. This chain is Catalase-peroxidase, found in Erythrobacter litoralis (strain HTCC2594).